A 445-amino-acid chain; its full sequence is Probable D-serine dehydratase (445 aa).

Lysine 119 carries the post-translational modification N6-(pyridoxal phosphate)lysine.

It belongs to the serine/threonine dehydratase family. DsdA subfamily. Pyridoxal 5'-phosphate serves as cofactor.

The catalysed reaction is D-serine = pyruvate + NH4(+). In Pseudomonas putida (strain GB-1), this protein is Probable D-serine dehydratase.